A 186-amino-acid polypeptide reads, in one-letter code: Thiol:disulfide interchange protein CycY (186 aa).

Residues 1–20 form the signal peptide; it reads MGRYTLALLPLIVFGGIAHG. The region spanning 47 to 182 is the Thioredoxin domain; that stretch reads DAEPAAARRA…LVPAMEKALG (136 aa). Cysteine 80 and cysteine 83 form a disulfide bridge.

This sequence belongs to the thioredoxin family. DsbE subfamily.

The protein resides in the periplasm. Its function is as follows. Required for disulfide bond formation in some periplasmic proteins. Also acts as a disulfide oxidoreductase in cytochromes c biogenesis. The cysteines of apocytochromes c must be in the reduced state for covalent linkage between the two moieties to occur. This chain is Thiol:disulfide interchange protein CycY (cycY), found in Rhizobium leguminosarum bv. viciae.